An 86-amino-acid polypeptide reads, in one-letter code: Small ribosomal subunit protein bS20 (86 aa).

This sequence belongs to the bacterial ribosomal protein bS20 family.

Binds directly to 16S ribosomal RNA. The chain is Small ribosomal subunit protein bS20 from Exiguobacterium sibiricum (strain DSM 17290 / CCUG 55495 / CIP 109462 / JCM 13490 / 255-15).